Reading from the N-terminus, the 628-residue chain is Dihydroxy-acid dehydratase (628 aa).

A Mg(2+)-binding site is contributed by Asp-80. Cys-121 lines the [2Fe-2S] cluster pocket. Mg(2+)-binding residues include Asp-122 and Lys-123. Lys-123 is modified (N6-carboxylysine). Cys-207 contacts [2Fe-2S] cluster. Glu-503 provides a ligand contact to Mg(2+). The Proton acceptor role is filled by Ser-529.

Belongs to the IlvD/Edd family. In terms of assembly, homodimer. [2Fe-2S] cluster is required as a cofactor. Mg(2+) serves as cofactor.

The catalysed reaction is (2R)-2,3-dihydroxy-3-methylbutanoate = 3-methyl-2-oxobutanoate + H2O. The enzyme catalyses (2R,3R)-2,3-dihydroxy-3-methylpentanoate = (S)-3-methyl-2-oxopentanoate + H2O. It functions in the pathway amino-acid biosynthesis; L-isoleucine biosynthesis; L-isoleucine from 2-oxobutanoate: step 3/4. It participates in amino-acid biosynthesis; L-valine biosynthesis; L-valine from pyruvate: step 3/4. Functions in the biosynthesis of branched-chain amino acids. Catalyzes the dehydration of (2R,3R)-2,3-dihydroxy-3-methylpentanoate (2,3-dihydroxy-3-methylvalerate) into 2-oxo-3-methylpentanoate (2-oxo-3-methylvalerate) and of (2R)-2,3-dihydroxy-3-methylbutanoate (2,3-dihydroxyisovalerate) into 2-oxo-3-methylbutanoate (2-oxoisovalerate), the penultimate precursor to L-isoleucine and L-valine, respectively. This is Dihydroxy-acid dehydratase from Psychrobacter arcticus (strain DSM 17307 / VKM B-2377 / 273-4).